Reading from the N-terminus, the 250-residue chain is uncharacterized protein (250 aa).

A signal peptide spans 1-24 (MKGFLKPNFSLGALFLTLSPIATA). Residue Cys25 is the site of N-palmitoyl cysteine attachment. The S-diacylglycerol cysteine moiety is linked to residue Cys25. In terms of domain architecture, TNase-like spans 44 to 200 (RLRKARVNHW…FNNRKNIFSY (157 aa)).

The protein localises to the cell membrane. This is an uncharacterized protein from Mycoplasma genitalium (strain ATCC 33530 / DSM 19775 / NCTC 10195 / G37) (Mycoplasmoides genitalium).